The primary structure comprises 207 residues: Uracil phosphoribosyltransferase (207 aa).

5-phospho-alpha-D-ribose 1-diphosphate-binding positions include Arg-77, Arg-102, and 129 to 137; that span reads DPMLATGGS. Residues Ile-192 and 197-199 each bind uracil; that span reads GDA. Position 198 (Asp-198) interacts with 5-phospho-alpha-D-ribose 1-diphosphate.

Belongs to the UPRTase family. The cofactor is Mg(2+).

The enzyme catalyses UMP + diphosphate = 5-phospho-alpha-D-ribose 1-diphosphate + uracil. Its pathway is pyrimidine metabolism; UMP biosynthesis via salvage pathway; UMP from uracil: step 1/1. Allosterically activated by GTP. Catalyzes the conversion of uracil and 5-phospho-alpha-D-ribose 1-diphosphate (PRPP) to UMP and diphosphate. The protein is Uracil phosphoribosyltransferase of Mycoplasma capricolum subsp. capricolum (strain California kid / ATCC 27343 / NCTC 10154).